A 574-amino-acid chain; its full sequence is Penicillin-binding protein activator LpoA (574 aa).

A signal peptide spans 1-25; that stretch reads MTILLQRAKFKKRLMPILFPLMLAG. A lipid anchor (N-palmitoyl cysteine) is attached at cysteine 26. Cysteine 26 is lipidated: S-diacylglycerol cysteine.

The protein belongs to the LpoA family. As to quaternary structure, interacts with PBP1a.

Its subcellular location is the cell outer membrane. Functionally, regulator of peptidoglycan synthesis that is essential for the function of penicillin-binding protein 1A (PBP1a). This is Penicillin-binding protein activator LpoA from Mannheimia succiniciproducens (strain KCTC 0769BP / MBEL55E).